Consider the following 500-residue polypeptide: Lycopene beta cyclase, chloroplastic (500 aa).

A chloroplast-targeting transit peptide spans 1 to 81 (MDTLLKTPNN…ELPMYDPSKG (81 aa)). 86–114 (LAVVGGGPAGLAVAQQVSEAGLSVCSIDP) is a binding site for NAD(+).

The protein belongs to the lycopene cyclase family.

The protein resides in the plastid. The protein localises to the chloroplast. It catalyses the reaction a carotenoid psi-end group = a carotenoid beta-end derivative. It functions in the pathway carotenoid biosynthesis; beta-carotene biosynthesis. The protein operates within carotenoid biosynthesis; beta-zeacarotene biosynthesis. In terms of biological role, catalyzes the double cyclization reaction which converts lycopene to beta-carotene and neurosporene to beta-zeacarotene. This is Lycopene beta cyclase, chloroplastic (LCY1) from Solanum lycopersicum (Tomato).